Reading from the N-terminus, the 727-residue chain is Capsid protein VP1 (727 aa).

Residues 1 to 10 (MAPPAKRARR) show a composition bias toward basic residues. Disordered regions lie at residues 1–38 (MAPP…SDAA) and 95–184 (VLTD…VGIS). Residues 4–13 (PAKRARRGLV) carry the Nuclear localization signal motif. Positions 19–64 (YLGPGNSLDQGEPTNPSDAAAKEHDEAYAAYLRSGKNPYLYFSPAD) are phospholipase A2-like. Residues 25 to 35 (SLDQGEPTNPS) show a composition bias toward polar residues. Residues 166-183 (SGNGSGGGGGGGSGGVGI) are compositionally biased toward gly residues. Residue asparagine 323 participates in Mg(2+) binding. Positions 507-536 (AQTDENQAADGDPRYAFGRQHGQKTTTTGE) are disordered. The cysteines at positions 633 and 637 are disulfide-linked.

Belongs to the parvoviridae capsid protein family. As to quaternary structure, interacts with host TFRC.

The protein resides in the virion. It localises to the host nucleus. Its function is as follows. Capsid protein self-assembles to form an icosahedral capsid with a T=1 symmetry, about 22 nm in diameter, and consisting of 60 copies of two size variants of the capsid proteins, VP1 and VP2, which differ by the presence of an N-terminal extension in the minor protein VP1. The capsid encapsulates the genomic ssDNA. Capsid proteins are responsible for the attachment to host cell receptor TFRC. This attachment induces virion internalization predominantly through clathrin-dependent endocytosis. Binding to the host receptors also induces capsid rearrangements leading to surface exposure of VP1 N-terminus. The protein is Capsid protein VP1 of Feline panleukopenia virus (FPV).